The chain runs to 350 residues: Small ribosomal subunit biogenesis GTPase RsgA (350 aa).

The segment covering Met-1 to Asn-17 has biased composition (polar residues). A disordered region spans residues Met-1–Leu-35. Residues Thr-103–Phe-273 enclose the CP-type G domain. GTP-binding positions include Asn-159–Asp-162 and Gly-213–Ser-221. Positions 297, 302, 304, and 310 each coordinate Zn(2+).

Belongs to the TRAFAC class YlqF/YawG GTPase family. RsgA subfamily. In terms of assembly, monomer. Associates with 30S ribosomal subunit, binds 16S rRNA. Zn(2+) serves as cofactor.

The protein localises to the cytoplasm. In terms of biological role, one of several proteins that assist in the late maturation steps of the functional core of the 30S ribosomal subunit. Helps release RbfA from mature subunits. May play a role in the assembly of ribosomal proteins into the subunit. Circularly permuted GTPase that catalyzes slow GTP hydrolysis, GTPase activity is stimulated by the 30S ribosomal subunit. This Yersinia pseudotuberculosis serotype O:1b (strain IP 31758) protein is Small ribosomal subunit biogenesis GTPase RsgA.